The primary structure comprises 274 residues: Large ribosomal subunit protein uL2 (274 aa).

Residues 224-274 (AMNPVDHPHGGGEGRTGEGQVPVSPWNTMTKGYRTRSNKRTQTFIVSRRKK) form a disordered region. Residues 229–239 (DHPHGGGEGRT) show a composition bias toward basic and acidic residues.

It belongs to the universal ribosomal protein uL2 family. In terms of assembly, part of the 50S ribosomal subunit. Forms a bridge to the 30S subunit in the 70S ribosome.

One of the primary rRNA binding proteins. Required for association of the 30S and 50S subunits to form the 70S ribosome, for tRNA binding and peptide bond formation. It has been suggested to have peptidyltransferase activity; this is somewhat controversial. Makes several contacts with the 16S rRNA in the 70S ribosome. The polypeptide is Large ribosomal subunit protein uL2 (Methylibium petroleiphilum (strain ATCC BAA-1232 / LMG 22953 / PM1)).